A 296-amino-acid chain; its full sequence is Thymidylate synthase (296 aa).

DUMP contacts are provided by residues arginine 24 and 151–152; that span reads RR. Cysteine 171 serves as the catalytic Nucleophile. Residues 197-200, asparagine 208, and 238-240 contribute to the dUMP site; these read RSAD and HVY. Residue aspartate 200 coordinates (6R)-5,10-methylene-5,6,7,8-tetrahydrofolate.

Belongs to the thymidylate synthase family. Homodimer.

It catalyses the reaction dUMP + (6R)-5,10-methylene-5,6,7,8-tetrahydrofolate = 7,8-dihydrofolate + dTMP. It participates in pyrimidine metabolism; dTTP biosynthesis. The polypeptide is Thymidylate synthase (tms1) (Agaricus bisporus (White button mushroom)).